The following is a 1059-amino-acid chain: MGTAQVLPGILQKHCCILPDRNTESQCTLCGEPEEEEGGDLAQPGLSFPGPAEEDIDQQYSWSPTQHFNEERYSPAPRNMKGLTGSRNQPQLCAGHTCGLSPPDDCEHPHDHMHHGSDVRQPYLLSPAESCPMDHHRCSPRSSVHSECMMMPVMLGDHVSSSTFPRMHYSSHYDTRDDCAMSHTSTKVNRIPANLLDQFEKQLPLHRDGFHTLQYQRASAATEQRNESPGRIRHLVHSVQKLFTKSHSLEGSSKSNINGTKSDSRVDDHHQSHLSKHSKRSKSKERKPESKHKSGMSSWWSSDDNLDSDSTYRTPSVAHRHHMDHIPHCYPEALQSPFGDLSLKTSKSNNDVKCSACEGLALTPDTRYMKRSSWSTLTVSQAKEAYRKSSLNLDKPLVHPEIKPSLRPCHYLQVPQDDWGAYPTGGKEEEIPCRRMRSGSYIKAMGDEESGESDSSPKTSPTVAIRPEPLLKPIIQRPLGDHQTQSYLQAATEVPVGHSLNPSINYNSPKFRSRNQSYMRAVSTLSQASCVSQMSEAEVNGQFESVCESVFSEVESQAMDALDLPGCFRTRSHSYLRAIQAGYSQDDECIPVMTSSNMTSTIRSTAAVSYTNYKKTPPPVPPRTTSKPLISVTAQSSTESTQDAYQDSRAQRMSPWPQDSRGGLYNSMDSLDSNKAMNLALETAAAQRHAADTQSSSTRSIDKAVLASKAEELLKSRCSSIGVQDSEFPDHQPYPRSDVETATDSDTESRGLREYHSVGVQVEDEKRHGRFKRSNSVTAAVQADLELEGFPGHVSMEDKGLQFGSSFQRHSEPSTPTQYGALRTVRTQGLFSYREDYRTQVDTSTLPPPDPWLEPSLDTVETGRMSPCRRDGSWFLKLLHTETKRMEGWCKEMEREAEENDLLEDILGKIRSAVGSAQLLMSQKFQQFYWLCQQNMDPSAMPRPTSQDLAGYWDMLQLSVEDVSMKFDELHQLKLNDWKIIESPERKEERKIPPPIPKKPPKGKFPITREKSLDLPDRQRQEARRRLMAAKRAASFRQNSATERADSIEIYIPEAQTRL.

Disordered stretches follow at residues 31–54 and 245–311; these read GEPEEEEGGDLAQPGLSFPGPAEE and KSHS…SDST. Over residues 245 to 261 the composition is skewed to polar residues; it reads KSHSLEGSSKSNINGTK. The segment covering 262–271 has biased composition (basic and acidic residues); sequence SDSRVDDHHQ. Residues 272 to 285 show a composition bias toward basic residues; the sequence is SHLSKHSKRSKSKE. Residues serine 302, serine 308, serine 390, and serine 456 each carry the phosphoserine modification. The disordered stretch occupies residues 613–669; the sequence is YKKTPPPVPPRTTSKPLISVTAQSSTESTQDAYQDSRAQRMSPWPQDSRGGLYNSMD. Residues 632–645 are compositionally biased toward polar residues; that stretch reads VTAQSSTESTQDAY. Residues serine 667, serine 670, serine 673, and serine 720 each carry the phosphoserine modification. The tract at residues 723–756 is disordered; it reads VQDSEFPDHQPYPRSDVETATDSDTESRGLREYH. Position 743 is a phosphothreonine (threonine 743). Position 745 is a phosphoserine (serine 745). Positions 747 to 756 are enriched in basic and acidic residues; sequence TESRGLREYH. A phosphoserine mark is found at serine 776, serine 811, serine 983, and serine 1012. Residues 985-1025 are disordered; sequence ERKEERKIPPPIPKKPPKGKFPITREKSLDLPDRQRQEARR. Positions 1007-1025 are enriched in basic and acidic residues; it reads ITREKSLDLPDRQRQEARR.

Belongs to the SAPAP family. Interacts with DLG4/PSD-95. As to expression, expressed in various brain areas.

The protein localises to the cell membrane. It localises to the postsynaptic density. It is found in the synapse. Functionally, may play a role in the molecular organization of synapses and neuronal cell signaling. Could be an adapter protein linking ion channel to the subsynaptic cytoskeleton. May induce enrichment of PSD-95/SAP90 at the plasma membrane. The polypeptide is Disks large-associated protein 2 (Mus musculus (Mouse)).